A 113-amino-acid polypeptide reads, in one-letter code: Type III endosome membrane protein TEMP (113 aa).

The disordered stretch occupies residues 1–22 (MNETNKTLVGPSELPTASAVAP). The Extracellular segment spans residues 1-29 (MNETNKTLVGPSELPTASAVAPGPGTGAR). The N-linked (GlcNAc...) asparagine glycan is linked to Asn-5. The chain crosses the membrane as a helical; Signal-anchor for type III membrane protein span at residues 30–50 (AWPVLVGFVLGAVVLSLLIAL). The Cytoplasmic segment spans residues 51–113 (AAKCHLCRRY…TEGSRDHFSL (63 aa)). Residues 66–113 (HRPLPETGRGGRPQVAEDEDDDGFIEDNYIQPGTGELGTEGSRDHFSL) form a disordered region. The span at 81–90 (AEDEDDDGFI) shows a compositional bias: acidic residues.

Its subcellular location is the membrane. It localises to the early endosome. It is found in the recycling endosome. The protein resides in the cell membrane. Its function is as follows. May be involved in membrane trafficking between endosomes and plasma membrane. The chain is Type III endosome membrane protein TEMP (C1orf210) from Homo sapiens (Human).